We begin with the raw amino-acid sequence, 525 residues long: Serine/threonine-protein kinase YPK3 (525 aa).

Phosphoserine is present on residues S90 and S105. At T107 the chain carries Phosphothreonine. Positions 128 to 424 constitute a Protein kinase domain; the sequence is FKPVRVLGQG…KTGANNKPTK (297 aa). ATP is bound by residues 134–142 and K157; that span reads LGQGAYGKV. The segment at 170–193 is disordered; that stretch reads ATDSKREDEDKNDGNNNDNDDGLS. Over residues 172-182 the composition is skewed to basic and acidic residues; that stretch reads DSKREDEDKND. D277 (proton acceptor) is an active-site residue. S321 carries the post-translational modification Phosphoserine; by PKH1 or PKH2. The AGC-kinase C-terminal domain maps to 445–524; sequence RKIDWKLLES…KASGSYLEKY (80 aa). T490 is modified (phosphothreonine; by TORC1). Position 513 is a phosphoserine; by TORC1 (S513).

It belongs to the protein kinase superfamily. AGC Ser/Thr protein kinase family. S6 kinase subfamily. Post-translationally, phosphorylated by PKA in a TORC1-dependent manner. Phosphorylation at PKA consensus sites RRxS/T decreases upon rapamycin treatment.

Its subcellular location is the cytoplasm. The enzyme catalyses L-seryl-[protein] + ATP = O-phospho-L-seryl-[protein] + ADP + H(+). The catalysed reaction is L-threonyl-[protein] + ATP = O-phospho-L-threonyl-[protein] + ADP + H(+). Its function is as follows. AGC kinase which plays a role in TOR complex 1 (TORC1) signaling pathway which mediates temporal control of cell growth in response to nutrients. Required for phosphorylation of ribosomal protein S6 (RPS6A/RPS6B) at 'Ser-232' and 'Ser-233'. In Saccharomyces cerevisiae (strain ATCC 204508 / S288c) (Baker's yeast), this protein is Serine/threonine-protein kinase YPK3.